The chain runs to 447 residues: Cobyrinate a,c-diamide synthase (447 aa).

Positions 252 to 439 (KIAVAFDESF…AHQHCIGNPY (188 aa)) constitute a GATase cobBQ-type domain. Cys-331 acts as the Nucleophile in catalysis.

The protein belongs to the CobB/CbiA family. Mg(2+) is required as a cofactor.

The enzyme catalyses cob(II)yrinate + 2 L-glutamine + 2 ATP + 2 H2O = cob(II)yrinate a,c diamide + 2 L-glutamate + 2 ADP + 2 phosphate + 2 H(+). The catalysed reaction is Ni-sirohydrochlorin + 2 L-glutamine + 2 ATP + 2 H2O = Ni-sirohydrochlorin a,c-diamide + 2 L-glutamate + 2 ADP + 2 phosphate + 2 H(+). The protein operates within cofactor biosynthesis; adenosylcobalamin biosynthesis; cob(II)yrinate a,c-diamide from sirohydrochlorin (anaerobic route): step 10/10. Its function is as follows. Catalyzes the ATP-dependent amidation of the two carboxylate groups at positions a and c of cobyrinate, using either L-glutamine or ammonia as the nitrogen source. Involved in the biosynthesis of the unique nickel-containing tetrapyrrole coenzyme F430, the prosthetic group of methyl-coenzyme M reductase (MCR), which plays a key role in methanogenesis and anaerobic methane oxidation. Catalyzes the ATP-dependent amidation of the two carboxylate groups at positions a and c of Ni-sirohydrochlorin, using L-glutamine or ammonia as the nitrogen source. This chain is Cobyrinate a,c-diamide synthase, found in Methanococcus maripaludis (strain C7 / ATCC BAA-1331).